The chain runs to 263 residues: Undecaprenyl-diphosphatase (263 aa).

8 helical membrane-spanning segments follow: residues 1–21 (MSYL…FLPI), 41–61 (FTKA…LVLY), 69–89 (WGFY…GFVV), 96–116 (LMGS…ILIW), 147–167 (AIAM…GLTL), 177–197 (FSFF…LLKI), 208–228 (LLLV…KFFI), and 238–258 (GFGY…YTGH).

It belongs to the UppP family.

The protein resides in the cell inner membrane. The catalysed reaction is di-trans,octa-cis-undecaprenyl diphosphate + H2O = di-trans,octa-cis-undecaprenyl phosphate + phosphate + H(+). Functionally, catalyzes the dephosphorylation of undecaprenyl diphosphate (UPP). Confers resistance to bacitracin. This chain is Undecaprenyl-diphosphatase, found in Bdellovibrio bacteriovorus (strain ATCC 15356 / DSM 50701 / NCIMB 9529 / HD100).